Here is a 415-residue protein sequence, read N- to C-terminus: Peptide chain release factor subunit 1 (415 aa).

It belongs to the eukaryotic release factor 1 family. In terms of assembly, heterodimer of two subunits, one of which binds GTP.

The protein localises to the cytoplasm. Its function is as follows. Directs the termination of nascent peptide synthesis (translation) in response to the termination codons UAA, UAG and UGA. The polypeptide is Peptide chain release factor subunit 1 (Thermococcus kodakarensis (strain ATCC BAA-918 / JCM 12380 / KOD1) (Pyrococcus kodakaraensis (strain KOD1))).